The chain runs to 293 residues: Cytosolic Fe-S cluster assembly factor CFD1 (293 aa).

Glycine 25–serine 32 serves as a coordination point for ATP. Positions 201 and 204 each coordinate [4Fe-4S] cluster. Serine 291 carries the post-translational modification Phosphoserine.

This sequence belongs to the Mrp/NBP35 ATP-binding proteins family. NUBP2/CFD1 subfamily. As to quaternary structure, heterotetramer of 2 NBP35 and 2 CFD1 chains. The cofactor is [4Fe-4S] cluster.

The protein resides in the cytoplasm. Component of the cytosolic iron-sulfur (Fe/S) protein assembly (CIA) machinery. Required for maturation of extramitochondrial Fe-S proteins. The NBP35-CFD1 heterotetramer forms a Fe-S scaffold complex, mediating the de novo assembly of an Fe-S cluster and its transfer to target apoproteins. Nucleotide binding/hydrolysis seems to be critcal for loading of Fe-S clusters onto CFD1 and NBP35. Required for biogenesis and export of both ribosomal subunits, which may reflect a role in assembly of the Fe/S clusters in RLI1, a protein which performs rRNA processing and ribosome export. The protein is Cytosolic Fe-S cluster assembly factor CFD1 of Saccharomyces cerevisiae (strain ATCC 204508 / S288c) (Baker's yeast).